The primary structure comprises 156 residues: Small ribosomal subunit protein uS7 (156 aa).

It belongs to the universal ribosomal protein uS7 family. Part of the 30S ribosomal subunit. Contacts proteins S9 and S11.

Its function is as follows. One of the primary rRNA binding proteins, it binds directly to 16S rRNA where it nucleates assembly of the head domain of the 30S subunit. Is located at the subunit interface close to the decoding center, probably blocks exit of the E-site tRNA. The polypeptide is Small ribosomal subunit protein uS7 (Mycoplasma mobile (strain ATCC 43663 / 163K / NCTC 11711) (Mesomycoplasma mobile)).